Consider the following 384-residue polypeptide: Cytochrome b (384 aa).

4 consecutive transmembrane segments (helical) span residues 33–53 (YGSL…FLAM), 77–98 (WLIR…YLHI), 113–133 (WNVG…GYVL), and 178–198 (FFAF…IHLL). His-83 and His-97 together coordinate heme b. 2 residues coordinate heme b: His-182 and His-196. His-201 lines the a ubiquinone pocket. 4 helical membrane-spanning segments follow: residues 226–246 (YKDL…ALFT), 288–308 (LGGV…PILH), 320–340 (LSQM…WIGG), and 347–367 (FIII…VLMP).

It belongs to the cytochrome b family. The cytochrome bc1 complex contains 3 respiratory subunits (MT-CYB, CYC1 and UQCRFS1), 2 core proteins (UQCRC1 and UQCRC2) and probably 6 low-molecular weight proteins. Heme b is required as a cofactor.

The protein resides in the mitochondrion inner membrane. Component of the ubiquinol-cytochrome c reductase complex (complex III or cytochrome b-c1 complex) that is part of the mitochondrial respiratory chain. The b-c1 complex mediates electron transfer from ubiquinol to cytochrome c. Contributes to the generation of a proton gradient across the mitochondrial membrane that is then used for ATP synthesis. This chain is Cytochrome b (mt-cyb), found in Anoplogaster cornuta (Common fangtooth).